A 404-amino-acid polypeptide reads, in one-letter code: tRNA/tmRNA (uracil-C(5))-methyltransferase (404 aa).

Residues glutamine 218, tyrosine 251, asparagine 256, glutamate 272, and aspartate 332 each contribute to the S-adenosyl-L-methionine site. The active-site Nucleophile is cysteine 358. The Proton acceptor role is filled by glutamate 392.

Belongs to the class I-like SAM-binding methyltransferase superfamily. RNA M5U methyltransferase family. TrmA subfamily.

The enzyme catalyses uridine(54) in tRNA + S-adenosyl-L-methionine = 5-methyluridine(54) in tRNA + S-adenosyl-L-homocysteine + H(+). It catalyses the reaction uridine(341) in tmRNA + S-adenosyl-L-methionine = 5-methyluridine(341) in tmRNA + S-adenosyl-L-homocysteine + H(+). Its function is as follows. Dual-specificity methyltransferase that catalyzes the formation of 5-methyluridine at position 54 (m5U54) in all tRNAs, and that of position 341 (m5U341) in tmRNA (transfer-mRNA). The chain is tRNA/tmRNA (uracil-C(5))-methyltransferase from Helicobacter hepaticus (strain ATCC 51449 / 3B1).